We begin with the raw amino-acid sequence, 1097 residues long: DNA-directed RNA polymerase subunit beta (1097 aa).

A disordered region spans residues methionine 1071 to aspartate 1097. Over residues lysine 1077 to threonine 1091 the composition is skewed to polar residues.

Belongs to the RNA polymerase beta chain family. In terms of assembly, in cyanobacteria the RNAP catalytic core is composed of 2 alpha, 1 beta, 1 beta', 1 gamma and 1 omega subunit. When a sigma factor is associated with the core the holoenzyme is formed, which can initiate transcription.

The catalysed reaction is RNA(n) + a ribonucleoside 5'-triphosphate = RNA(n+1) + diphosphate. Functionally, DNA-dependent RNA polymerase catalyzes the transcription of DNA into RNA using the four ribonucleoside triphosphates as substrates. This is DNA-directed RNA polymerase subunit beta from Prochlorococcus marinus subsp. pastoris (strain CCMP1986 / NIES-2087 / MED4).